Reading from the N-terminus, the 350-residue chain is S-adenosylmethionine:tRNA ribosyltransferase-isomerase (350 aa).

Belongs to the QueA family. Monomer.

Its subcellular location is the cytoplasm. The catalysed reaction is 7-aminomethyl-7-carbaguanosine(34) in tRNA + S-adenosyl-L-methionine = epoxyqueuosine(34) in tRNA + adenine + L-methionine + 2 H(+). The protein operates within tRNA modification; tRNA-queuosine biosynthesis. In terms of biological role, transfers and isomerizes the ribose moiety from AdoMet to the 7-aminomethyl group of 7-deazaguanine (preQ1-tRNA) to give epoxyqueuosine (oQ-tRNA). In Vibrio parahaemolyticus serotype O3:K6 (strain RIMD 2210633), this protein is S-adenosylmethionine:tRNA ribosyltransferase-isomerase.